The chain runs to 388 residues: Succinate--CoA ligase [ADP-forming] subunit beta (388 aa).

One can recognise an ATP-grasp domain in the interval 9–244 (KEILRKYGVT…LDEEDPAEIE (236 aa)). ATP contacts are provided by residues lysine 46, 53–55 (GRG), glutamate 99, alanine 102, and glutamate 107. Mg(2+) is bound by residues asparagine 199 and aspartate 213. Residues asparagine 264 and 321-323 (GIM) each bind substrate.

Belongs to the succinate/malate CoA ligase beta subunit family. In terms of assembly, heterotetramer of two alpha and two beta subunits. Requires Mg(2+) as cofactor.

It carries out the reaction succinate + ATP + CoA = succinyl-CoA + ADP + phosphate. The catalysed reaction is GTP + succinate + CoA = succinyl-CoA + GDP + phosphate. It functions in the pathway carbohydrate metabolism; tricarboxylic acid cycle; succinate from succinyl-CoA (ligase route): step 1/1. Functionally, succinyl-CoA synthetase functions in the citric acid cycle (TCA), coupling the hydrolysis of succinyl-CoA to the synthesis of either ATP or GTP and thus represents the only step of substrate-level phosphorylation in the TCA. The beta subunit provides nucleotide specificity of the enzyme and binds the substrate succinate, while the binding sites for coenzyme A and phosphate are found in the alpha subunit. The chain is Succinate--CoA ligase [ADP-forming] subunit beta from Janthinobacterium sp. (strain Marseille) (Minibacterium massiliensis).